Consider the following 113-residue polypeptide: Nucleoid-associated protein CLJ_B0037 (113 aa).

Positions 93-102 are enriched in basic and acidic residues; it reads EEDTSSEVKR. Residues 93–113 are disordered; sequence EEDTSSEVKRLTGGMNLPGMF.

It belongs to the YbaB/EbfC family. As to quaternary structure, homodimer.

The protein localises to the cytoplasm. The protein resides in the nucleoid. Its function is as follows. Binds to DNA and alters its conformation. May be involved in regulation of gene expression, nucleoid organization and DNA protection. The chain is Nucleoid-associated protein CLJ_B0037 from Clostridium botulinum (strain 657 / Type Ba4).